Here is a 375-residue protein sequence, read N- to C-terminus: Probable G-protein coupled receptor 27 (375 aa).

Topologically, residues 1-23 (MANASEPGGSGGGEAAALGLKLA) are extracellular. The N-linked (GlcNAc...) asparagine glycan is linked to Asn3. A helical transmembrane segment spans residues 24–44 (TLSLLLCVSLAGNVLFALLIV). Topologically, residues 45–55 (RERSLHRAPYY) are cytoplasmic. A helical transmembrane segment spans residues 56 to 76 (LLLDLCLADGLRALACLPAVM). The Extracellular portion of the chain corresponds to 77–97 (LAARRAAAAAGAPPGALGCKL). A disulfide bridge links Cys95 with Cys171. The chain crosses the membrane as a helical span at residues 98-118 (LAFLAALFCFHAAFLLLGVGV). Residues 119-139 (TRYLAIAHHRFYAERLAGWPC) lie on the Cytoplasmic side of the membrane. A helical membrane pass occupies residues 140-160 (AAMLVCAAWALALAAAFPPVL). Residues 161-181 (DGGGDDEDAPCALEQRPDGAP) are Extracellular-facing. A helical membrane pass occupies residues 182–202 (GALGFLLLLAVVVGATHLVYL). Residues 203-285 (RLLFFIHDRR…FKTEKRLCKM (83 aa)) are Cytoplasmic-facing. A helical membrane pass occupies residues 286–306 (FYAVTLLFLLLWGPYVVASYL). Residues 307–320 (RVLVRPGAVPQAYL) lie on the Extracellular side of the membrane. Residues 321–341 (TASVWLTFAQAGINPVVCFLF) form a helical membrane-spanning segment. Topologically, residues 342-375 (NRELRDCFRAQFPCCQSPRTTQATHPCDLKGIGL) are cytoplasmic.

This sequence belongs to the G-protein coupled receptor 1 family. In terms of tissue distribution, highly expressed as a 3.0 kb transcript in brain, ovary, testis, heart, prostate and peripheral Leukocytes. Lower levels in pancreas and small intestine. A 2.3 kb transcript was also found in peripheral Leukocytes. In brain regions, detected as a 3.0 kb transcript in all regions tested. Highest levels in the caudate nucleus, putamen, hippocampus and subthalamic nucleus. Lowest level in the cerebellum.

It localises to the cell membrane. Its function is as follows. Orphan receptor. Possible candidate for amine-like G-protein coupled receptor. This Homo sapiens (Human) protein is Probable G-protein coupled receptor 27 (GPR27).